The sequence spans 20 residues: Thrombin-like enzyme okinaxobin-2 (20 aa).

The Peptidase S1 domain maps to valine 1 to tyrosine 20.

Belongs to the peptidase S1 family. Snake venom subfamily. In terms of assembly, monomer. Glycosylated. As to expression, expressed by the venom gland.

It localises to the secreted. With respect to regulation, strongly inactivated by diisopropylfluorophosphate (DFP) and to a lesser extent by tosyl-L-lysine chloromethyl ketone (TLCK). In terms of biological role, thrombin-like snake venom serine protease. Releases both fibrinopeptides A and B from fibrinogen (FGA and FGB) to form fibrin clots. The protein is Thrombin-like enzyme okinaxobin-2 of Ovophis okinavensis (Ryukyu Island pit viper).